Reading from the N-terminus, the 238-residue chain is 1-(5-phosphoribosyl)-5-[(5-phosphoribosylamino)methylideneamino] imidazole-4-carboxamide isomerase (238 aa).

Aspartate 8 (proton acceptor) is an active-site residue. Residue aspartate 129 is the Proton donor of the active site.

It belongs to the HisA/HisF family.

It is found in the cytoplasm. It carries out the reaction 1-(5-phospho-beta-D-ribosyl)-5-[(5-phospho-beta-D-ribosylamino)methylideneamino]imidazole-4-carboxamide = 5-[(5-phospho-1-deoxy-D-ribulos-1-ylimino)methylamino]-1-(5-phospho-beta-D-ribosyl)imidazole-4-carboxamide. Its pathway is amino-acid biosynthesis; L-histidine biosynthesis; L-histidine from 5-phospho-alpha-D-ribose 1-diphosphate: step 4/9. The sequence is that of 1-(5-phosphoribosyl)-5-[(5-phosphoribosylamino)methylideneamino] imidazole-4-carboxamide isomerase from Clostridium kluyveri (strain NBRC 12016).